Consider the following 337-residue polypeptide: uncharacterized protein (337 aa).

Position 29-36 (Gly-29–Ser-36) interacts with ATP.

The protein belongs to the archaeal ATPase family.

This is an uncharacterized protein from Methanocaldococcus jannaschii (strain ATCC 43067 / DSM 2661 / JAL-1 / JCM 10045 / NBRC 100440) (Methanococcus jannaschii).